The primary structure comprises 259 residues: V-type proton ATPase subunit D (259 aa).

The disordered stretch occupies residues 214 to 259 (KLKEQEAAQRALEGPPKEEAGGTHSENQPPRNLLAVEEDNLPVLFN).

Belongs to the V-ATPase D subunit family. In terms of assembly, V-ATPase is a heteromultimeric enzyme made up of two complexes: the ATP-hydrolytic V1 complex and the proton translocation V0 complex. The V1 complex consists of three catalytic AB heterodimers that form a heterohexamer, three peripheral stalks each consisting of EG heterodimers, one central rotor including subunits D and F, and the regulatory subunits C and H. The proton translocation complex V0 consists of the proton transport subunit a, a ring of proteolipid subunits c9c'', rotary subunit d, and The proton translocation complex V0 consists of the proton transport subunit a, a ring of proteolipid subunits c9c'', rotary subunit d, subunits e and f, and the accessory subunits vah-19/Ac45 and vah-20/PRR.

Functionally, subunit of the V1 complex of vacuolar(H+)-ATPase (V-ATPase), a multisubunit enzyme composed of a peripheral complex (V1) that hydrolyzes ATP and a membrane integral complex (V0) that translocates protons. V-ATPase is responsible for acidifying and maintaining the pH of intracellular compartments and in some cell types, is targeted to the plasma membrane, where it is responsible for acidifying the extracellular environment. The chain is V-type proton ATPase subunit D from Caenorhabditis briggsae.